An 883-amino-acid polypeptide reads, in one-letter code: DNA double-strand break repair Rad50 ATPase (883 aa).

ATP-binding positions include R12, 32–38, and Q134; that span reads NGSGKSS. Residues 218-420 adopt a coiled-coil conformation; the sequence is ELRGELGGLE…EIGSRRGELK (203 aa). The Zinc-hook domain occupies 395–492; it reads IQKARERKEE…ELVEVEKTLK (98 aa). The Zn(2+) site is built by C440 and C443. Coiled-coil stretches lie at residues 452-585 and 620-741; these read RKEL…KKLG and EDLL…LLKE. Residue 790–795 participates in ATP binding; the sequence is FLSGGE.

The protein belongs to the SMC family. RAD50 subfamily. As to quaternary structure, homodimer. Forms a heterotetramer composed of two Mre11 subunits and two Rad50 subunits. The cofactor is Zn(2+).

Functionally, part of the Rad50/Mre11 complex, which is involved in the early steps of DNA double-strand break (DSB) repair. The complex may facilitate opening of the processed DNA ends to aid in the recruitment of HerA and NurA. Rad50 controls the balance between DNA end bridging and DNA resection via ATP-dependent structural rearrangements of the Rad50/Mre11 complex. This Thermococcus kodakarensis (strain ATCC BAA-918 / JCM 12380 / KOD1) (Pyrococcus kodakaraensis (strain KOD1)) protein is DNA double-strand break repair Rad50 ATPase.